A 249-amino-acid polypeptide reads, in one-letter code: Cytoplasmic envelopment protein 1 (249 aa).

This sequence belongs to the herpesviridae cytoplasmic envelopment protein 1 family.

The protein localises to the virion. Its subcellular location is the virion tegument. It is found in the host cytoplasm. The protein resides in the host Golgi apparatus. Plays a critical role in cytoplasmic virus egress. Participates in the final step of tegumentation and envelope acquisition within the host cytoplasm. This Homo sapiens (Human) protein is Cytoplasmic envelopment protein 1 (UL103).